We begin with the raw amino-acid sequence, 88 residues long: Small ribosomal subunit protein uS15 (88 aa).

It belongs to the universal ribosomal protein uS15 family. In terms of assembly, part of the 30S ribosomal subunit. Forms a bridge to the 50S subunit in the 70S ribosome, contacting the 23S rRNA.

Functionally, one of the primary rRNA binding proteins, it binds directly to 16S rRNA where it helps nucleate assembly of the platform of the 30S subunit by binding and bridging several RNA helices of the 16S rRNA. Forms an intersubunit bridge (bridge B4) with the 23S rRNA of the 50S subunit in the ribosome. The chain is Small ribosomal subunit protein uS15 from Variovorax paradoxus (strain S110).